The following is a 154-amino-acid chain: NADPH-dependent 7-cyano-7-deazaguanine reductase (154 aa).

Positions 1 to 24 are disordered; the sequence is MPKTDVSGLSQLGTKVDLPQSPEE. Cysteine 52 acts as the Thioimide intermediate in catalysis. Aspartate 59 serves as the catalytic Proton donor. Residues 74–76 and 93–94 contribute to the substrate site; these read VES and HE.

The protein belongs to the GTP cyclohydrolase I family. QueF type 1 subfamily.

The protein resides in the cytoplasm. The enzyme catalyses 7-aminomethyl-7-carbaguanine + 2 NADP(+) = 7-cyano-7-deazaguanine + 2 NADPH + 3 H(+). The protein operates within tRNA modification; tRNA-queuosine biosynthesis. Functionally, catalyzes the NADPH-dependent reduction of 7-cyano-7-deazaguanine (preQ0) to 7-aminomethyl-7-deazaguanine (preQ1). The polypeptide is NADPH-dependent 7-cyano-7-deazaguanine reductase (Sinorhizobium fredii (strain NBRC 101917 / NGR234)).